A 441-amino-acid polypeptide reads, in one-letter code: Tubulin beta-1 chain (441 aa).

Residues Q11, E69, S138, G142, T143, G144, N204, and N226 each contribute to the GTP site. Residue E69 participates in Mg(2+) binding.

The protein belongs to the tubulin family. Dimer of alpha and beta chains. A typical microtubule is a hollow water-filled tube with an outer diameter of 25 nm and an inner diameter of 15 nM. Alpha-beta heterodimers associate head-to-tail to form protofilaments running lengthwise along the microtubule wall with the beta-tubulin subunit facing the microtubule plus end conferring a structural polarity. Microtubules usually have 13 protofilaments but different protofilament numbers can be found in some organisms and specialized cells. Mg(2+) serves as cofactor. As to expression, expressed primarily in touch receptor neurons.

It localises to the cytoplasm. The protein resides in the cytoskeleton. Its function is as follows. Tubulin is the major constituent of microtubules, a cylinder consisting of laterally associated linear protofilaments composed of alpha- and beta-tubulin heterodimers. Microtubules grow by the addition of GTP-tubulin dimers to the microtubule end, where a stabilizing cap forms. Below the cap, tubulin dimers are in GDP-bound state, owing to GTPase activity of alpha-tubulin. Plays a role in mechanosensory transduction (touch sensitivity). Mec-7 beta-tubulin is required for the production of 15-protofilament microtubules. In Caenorhabditis briggsae, this protein is Tubulin beta-1 chain (mec-7).